The following is a 571-amino-acid chain: Proline--tRNA ligase (571 aa).

This sequence belongs to the class-II aminoacyl-tRNA synthetase family. ProS type 1 subfamily. Homodimer.

The protein resides in the cytoplasm. It carries out the reaction tRNA(Pro) + L-proline + ATP = L-prolyl-tRNA(Pro) + AMP + diphosphate. Functionally, catalyzes the attachment of proline to tRNA(Pro) in a two-step reaction: proline is first activated by ATP to form Pro-AMP and then transferred to the acceptor end of tRNA(Pro). As ProRS can inadvertently accommodate and process non-cognate amino acids such as alanine and cysteine, to avoid such errors it has two additional distinct editing activities against alanine. One activity is designated as 'pretransfer' editing and involves the tRNA(Pro)-independent hydrolysis of activated Ala-AMP. The other activity is designated 'posttransfer' editing and involves deacylation of mischarged Ala-tRNA(Pro). The misacylated Cys-tRNA(Pro) is not edited by ProRS. This chain is Proline--tRNA ligase, found in Pseudomonas putida (strain W619).